The chain runs to 238 residues: Ribonuclease PH (238 aa).

Residues R86 and 124–126 (GTR) contribute to the phosphate site.

The protein belongs to the RNase PH family. Homohexameric ring arranged as a trimer of dimers.

It catalyses the reaction tRNA(n+1) + phosphate = tRNA(n) + a ribonucleoside 5'-diphosphate. Functionally, phosphorolytic 3'-5' exoribonuclease that plays an important role in tRNA 3'-end maturation. Removes nucleotide residues following the 3'-CCA terminus of tRNAs; can also add nucleotides to the ends of RNA molecules by using nucleoside diphosphates as substrates, but this may not be physiologically important. Probably plays a role in initiation of 16S rRNA degradation (leading to ribosome degradation) during starvation. The polypeptide is Ribonuclease PH (Actinobacillus pleuropneumoniae serotype 7 (strain AP76)).